The sequence spans 236 residues: Small ribosomal subunit protein uS2c (236 aa).

The protein belongs to the universal ribosomal protein uS2 family.

Its subcellular location is the plastid. The protein localises to the chloroplast. The protein is Small ribosomal subunit protein uS2c (rps2) of Physcomitrium patens (Spreading-leaved earth moss).